We begin with the raw amino-acid sequence, 834 residues long: Glycerol-3-phosphate acyltransferase (834 aa).

The short motif at 309–314 (CHRSHI) is the HXXXXD motif element.

The protein belongs to the GPAT/DAPAT family.

The protein resides in the cell inner membrane. It catalyses the reaction sn-glycerol 3-phosphate + an acyl-CoA = a 1-acyl-sn-glycero-3-phosphate + CoA. The protein operates within phospholipid metabolism; CDP-diacylglycerol biosynthesis; CDP-diacylglycerol from sn-glycerol 3-phosphate: step 1/3. The chain is Glycerol-3-phosphate acyltransferase from Pseudomonas aeruginosa (strain UCBPP-PA14).